The primary structure comprises 102 residues: Small ubiquitin-related modifier 1-A (102 aa).

The disordered stretch occupies residues methionine 1–glycine 20. Residues aspartate 21 to glycine 98 enclose the Ubiquitin-like domain. Residue glycine 98 forms a Glycyl lysine isopeptide (Gly-Lys) (interchain with K-? in acceptor proteins) linkage. The propeptide occupies histidine 99 to phenylalanine 102.

The protein belongs to the ubiquitin family. SUMO subfamily. In terms of assembly, interacts with sae2, ube2i, ranbp2, pias1 and pias2. Covalently attached to a number of proteins including rangap1 and ranbp2. Interacts with sox9 and sox10. In terms of processing, cleavage of precursor form by a sentrin-specific protease is necessary for function.

The protein localises to the nucleus membrane. It localises to the nucleus speckle. Its subcellular location is the cytoplasm. The protein resides in the nucleus. It is found in the PML body. The protein localises to the cell membrane. Its function is as follows. Ubiquitin-like protein that can be covalently attached to proteins as a monomer or a lysine-linked polymer. Covalent attachment via an isopeptide bond to its substrates requires prior activation by the E1 complex sae1-sae2 and linkage to the E2 enzyme ube2i. This post-translational modification on lysine residues of proteins plays a crucial role in a number of cellular processes such as nuclear transport, DNA replication and repair, mitosis and signal transduction. Polymeric sumo1 chains are also susceptible to polyubiquitination which functions as a signal for proteasomal degradation of modified proteins. In Xenopus laevis (African clawed frog), this protein is Small ubiquitin-related modifier 1-A (sumo1-a).